The primary structure comprises 155 residues: Mitochondrial import protein 1 (155 aa).

The protein belongs to the MIM1 family.

It localises to the mitochondrion outer membrane. Required for the assembly of the TOM (translocase of outer membrane) receptor complex, which is responsible for the recognition and translocation of cytosolically synthesized mitochondrial preproteins. This Eremothecium gossypii (strain ATCC 10895 / CBS 109.51 / FGSC 9923 / NRRL Y-1056) (Yeast) protein is Mitochondrial import protein 1.